We begin with the raw amino-acid sequence, 246 residues long: Probable transcriptional regulatory protein RD1_2018 (246 aa).

This sequence belongs to the TACO1 family.

It localises to the cytoplasm. This Roseobacter denitrificans (strain ATCC 33942 / OCh 114) (Erythrobacter sp. (strain OCh 114)) protein is Probable transcriptional regulatory protein RD1_2018.